The following is a 395-amino-acid chain: Yellow-related salivary protein M35 (395 aa).

Residues 1 to 18 form the signal peptide; it reads MKLILTVLAFLSLQVALS.

Belongs to the major royal jelly protein family. In terms of tissue distribution, salivary gland (at protein level).

Its subcellular location is the secreted. Its function is as follows. Probably modulates blood feeding of sand flies on vertebrate species by binding and sequestering different mediators involved in the host response. Functions as a chemoattractant for host neutrophils; likely acts through a G-protein-coupled receptor and effect is dependent on calcium influx and phosphatidylinositol 3-kinases (PI3K) activity. In terms of biological role, (Microbial infection) Probably enhances infection caused by Leishmania species in the host through augmentation of host neutrophil recruitment into the skin. This Phlebotomus duboscqi (Sandfly) protein is Yellow-related salivary protein M35.